The sequence spans 1046 residues: Nuclear pore complex protein NUP96 (1046 aa).

The 137-residue stretch at serine 51 to phenylalanine 187 folds into the Peptidase S59 domain. The segment covering arginine 283–asparagine 295 has biased composition (polar residues). The interval arginine 283 to valine 304 is disordered. Residue serine 523 is modified to Phosphoserine.

Part of the nuclear pore complex (NPC). The NPC has an eight-fold symmetrical structure comprising a central transport channel and two rings, the cytoplasmic and nuclear rings, to which eight filaments are attached. The cytoplasmic filaments have loose ends, while the nuclear filaments are joined in a distal ring, forming a nuclear basket. NPCs are highly dynamic in configuration and composition, and can be devided in 3 subcomplexes, the NUP62 subcomplex, the NUP107-160 subcomplex and the NUP93 subcomplex, containing approximately 30 different nucleoporin proteins. In terms of tissue distribution, expressed in roots, leaves, stems, flowers and siliques.

It is found in the nucleus membrane. The protein localises to the nucleus. It localises to the nuclear pore complex. In terms of biological role, contributes to the transfer of mature mRNA from the nucleus to the cytosol. Required for both R gene-mediated and basal disease resistance. RNA export seems to play a critical role in stress responses and regulation of plant growth and development. The sequence is that of Nuclear pore complex protein NUP96 from Arabidopsis thaliana (Mouse-ear cress).